A 423-amino-acid polypeptide reads, in one-letter code: Putative competence-damage inducible protein (423 aa).

Belongs to the CinA family.

In Streptococcus pyogenes serotype M6 (strain ATCC BAA-946 / MGAS10394), this protein is Putative competence-damage inducible protein.